Reading from the N-terminus, the 155-residue chain is FHA domain-containing protein FhaB (155 aa).

Residues 6–28 form a helical membrane-spanning segment; it reads LQLTRVGFLLLLWLFIWSVLRIL. Residue Thr-36 is modified to Phosphothreonine. The 50-residue stretch at 83–132 folds into the FHA domain; it reads VLIGRADDSTLVLTDDYASTRHARLSPRGSEWYVEDLGSTNGTYLDRAKV.

In terms of processing, phosphorylated by PknB. Dephosphorylated by PstP.

It localises to the cell membrane. This is FHA domain-containing protein FhaB (fhaB) from Mycolicibacterium smegmatis (strain ATCC 700084 / mc(2)155) (Mycobacterium smegmatis).